The sequence spans 41 residues: Trypsin inhibitor (41 aa).

3 disulfides stabilise this stretch: cysteine 15/cysteine 26, cysteine 17/cysteine 24, and cysteine 29/cysteine 37.

Functionally, has two active sites that simultaneously bind and inhibit trypsin. The chain is Trypsin inhibitor from Trichosanthes kirilowii (Chinese snake gourd).